The following is a 546-amino-acid chain: EH domain-containing protein 2 (546 aa).

EF-hand domains lie at 15–50 (EHQKIYKEWFNIADSDGDGRVSGNDATKFFAMSKLS) and 51–84 (RQELKQVWAVADSKRQGFLGLSEFITAMKLVSLA). Positions 16–94 (HQKIYKEWFN…QEGHEITSDL (79 aa)) constitute an EH domain. Aspartate 28, aspartate 30, aspartate 32, arginine 34, aspartate 39, aspartate 62, and glutamate 73 together coordinate Ca(2+). The region spanning 194–430 (FDAKPMVMLL…LLADLMDVPK (237 aa)) is the Dynamin-type G domain. Residues 204–211 (GQYSTGKT) are G1 motif. 204 to 211 (GQYSTGKT) contributes to the GTP binding site. The segment at 230–231 (EP) is G2 motif. A G3 motif region spans residues 292–295 (DTPG). GTP contacts are provided by residues 292-296 (DTPGV) and lysine 359. A G4 motif region spans residues 358–361 (NKAD). A region of interest (G5 motif) is located at residue valine 382. 395-398 (SFND) provides a ligand contact to GTP. Positions 429–436 (PKKACDRK) match the Nuclear localization signal motif. Positions 467–490 (KSKAQQRLMDNLEEEFGKVQREFH) form a coiled coil.

It belongs to the TRAFAC class dynamin-like GTPase superfamily. Dynamin/Fzo/YdjA family. EHD subfamily. As to quaternary structure, homooligomer, and heterooligomer with EHD1. Interacts with AP-4 complex subunit sigma (At2g19790).

The protein resides in the endosome membrane. It is found in the cell membrane. The protein localises to the nucleus. Its subcellular location is the cytoplasm. The catalysed reaction is GTP + H2O = GDP + phosphate + H(+). Functionally, involved in endocytosis negative regulation, probably by influencing actin organization. Acts in early endocytic membrane fusion and membrane trafficking of recycling endosomes. Exhibits an inhibitory effect on endocytosis when over-expressed. The sequence is that of EH domain-containing protein 2 from Arabidopsis thaliana (Mouse-ear cress).